The following is a 105-amino-acid chain: Large ribosomal subunit protein bL21c (105 aa).

Belongs to the bacterial ribosomal protein bL21 family. Part of the 50S ribosomal subunit.

The protein localises to the plastid. Its subcellular location is the chloroplast. Its function is as follows. This protein binds to 23S rRNA. This is Large ribosomal subunit protein bL21c from Phaeodactylum tricornutum (strain CCAP 1055/1).